Reading from the N-terminus, the 270-residue chain is Non-structural maintenance of chromosomes element 1 homolog (270 aa).

The RING-type; atypical zinc finger occupies 185–226 (CNVCHKIAIQCQLCENCGIPLHLQCAGIYFRGIANPLCPNCK). Positions 236-270 (LSQVSSQGPSHSQAAPVRGRNQRSRNISTVARTSR) are disordered. Composition is skewed to polar residues over residues 237–248 (SQVSSQGPSHSQ) and 259–270 (SRNISTVARTSR).

Belongs to the NSE1 family. Component of the SMC5-SMC6 complex.

The protein resides in the nucleus. Its subcellular location is the chromosome. It is found in the telomere. It carries out the reaction S-ubiquitinyl-[E2 ubiquitin-conjugating enzyme]-L-cysteine + [acceptor protein]-L-lysine = [E2 ubiquitin-conjugating enzyme]-L-cysteine + N(6)-ubiquitinyl-[acceptor protein]-L-lysine.. RING-type zinc finger-containing E3 ubiquitin ligase that assembles with melanoma antigen protein (MAGE) to catalyze the direct transfer of ubiquitin from E2 ubiquitin-conjugating enzyme to a specific substrate. Within MAGE-RING ubiquitin ligase complex, MAGE stimulates and specifies ubiquitin ligase activity likely through recruitment and/or stabilization of the E2 ubiquitin-conjugating enzyme at the E3:substrate complex. Involved in maintenance of genome integrity, DNA damage response and DNA repair. The sequence is that of Non-structural maintenance of chromosomes element 1 homolog (nsmce1) from Xenopus tropicalis (Western clawed frog).